The chain runs to 1598 residues: Pentafunctional AROM polypeptide (1598 aa).

Positions 1 to 384 (MGVPTKISIL…YEPRACTVSN (384 aa)) are 3-dehydroquinate synthase. NAD(+)-binding positions include 44–46 (DTN), 81–84 (ESSK), 114–116 (GGV), and D119. A 7-phospho-2-dehydro-3-deoxy-D-arabino-heptonate-binding site is contributed by R130. 139-140 (TT) is a binding site for NAD(+). 7-phospho-2-dehydro-3-deoxy-D-arabino-heptonate-binding residues include D146 and K152. K161 lines the NAD(+) pocket. N162 serves as a coordination point for 7-phospho-2-dehydro-3-deoxy-D-arabino-heptonate. Residues 179–182 (FLNT) and N190 contribute to the NAD(+) site. Residue E194 coordinates Zn(2+). Residues 194–197 (EVIK) and K250 contribute to the 7-phospho-2-dehydro-3-deoxy-D-arabino-heptonate site. E260 acts as the Proton acceptor; for 3-dehydroquinate synthase activity in catalysis. 7-phospho-2-dehydro-3-deoxy-D-arabino-heptonate contacts are provided by residues 264–268 (RNLLN) and H271. H271 is a binding site for Zn(2+). Catalysis depends on H275, which acts as the Proton acceptor; for 3-dehydroquinate synthase activity. H287 and K356 together coordinate 7-phospho-2-dehydro-3-deoxy-D-arabino-heptonate. H287 is a Zn(2+) binding site. Positions 397-842 (VYPGFPKSLN…WDTLAQTFKV (446 aa)) are EPSP synthase. Residue C824 is the For EPSP synthase activity of the active site. The segment at 867–1059 (AASIFIIGMR…RRKENTFFVS (193 aa)) is shikimate kinase. 874–881 (GMRGAGKT) serves as a coordination point for ATP. A 3-dehydroquinase region spans residues 1060 to 1280 (LTFPDLTPAS…AAPGQLSARE (221 aa)). Residue H1183 is the Proton acceptor; for 3-dehydroquinate dehydratase activity of the active site. Catalysis depends on K1211, which acts as the Schiff-base intermediate with substrate; for 3-dehydroquinate dehydratase activity. The interval 1293–1598 (AKKFAVIGKP…GVSSSDDIIS (306 aa)) is shikimate dehydrogenase.

It in the N-terminal section; belongs to the sugar phosphate cyclases superfamily. Dehydroquinate synthase family. This sequence in the 2nd section; belongs to the EPSP synthase family. The protein in the 3rd section; belongs to the shikimate kinase family. In the 4th section; belongs to the type-I 3-dehydroquinase family. It in the C-terminal section; belongs to the shikimate dehydrogenase family. As to quaternary structure, homodimer. Zn(2+) serves as cofactor.

It localises to the cytoplasm. The enzyme catalyses 7-phospho-2-dehydro-3-deoxy-D-arabino-heptonate = 3-dehydroquinate + phosphate. It carries out the reaction 3-dehydroquinate = 3-dehydroshikimate + H2O. The catalysed reaction is shikimate + NADP(+) = 3-dehydroshikimate + NADPH + H(+). It catalyses the reaction shikimate + ATP = 3-phosphoshikimate + ADP + H(+). The enzyme catalyses 3-phosphoshikimate + phosphoenolpyruvate = 5-O-(1-carboxyvinyl)-3-phosphoshikimate + phosphate. Its pathway is metabolic intermediate biosynthesis; chorismate biosynthesis; chorismate from D-erythrose 4-phosphate and phosphoenolpyruvate: step 2/7. It participates in metabolic intermediate biosynthesis; chorismate biosynthesis; chorismate from D-erythrose 4-phosphate and phosphoenolpyruvate: step 3/7. It functions in the pathway metabolic intermediate biosynthesis; chorismate biosynthesis; chorismate from D-erythrose 4-phosphate and phosphoenolpyruvate: step 4/7. The protein operates within metabolic intermediate biosynthesis; chorismate biosynthesis; chorismate from D-erythrose 4-phosphate and phosphoenolpyruvate: step 5/7. Its pathway is metabolic intermediate biosynthesis; chorismate biosynthesis; chorismate from D-erythrose 4-phosphate and phosphoenolpyruvate: step 6/7. Its function is as follows. The AROM polypeptide catalyzes 5 consecutive enzymatic reactions in prechorismate polyaromatic amino acid biosynthesis. This is Pentafunctional AROM polypeptide from Paracoccidioides lutzii (strain ATCC MYA-826 / Pb01) (Paracoccidioides brasiliensis).